The primary structure comprises 363 residues: Anhydro-N-acetylmuramic acid kinase (363 aa).

10–17 (GTSLDGMD) lines the ATP pocket.

Belongs to the anhydro-N-acetylmuramic acid kinase family.

It catalyses the reaction 1,6-anhydro-N-acetyl-beta-muramate + ATP + H2O = N-acetyl-D-muramate 6-phosphate + ADP + H(+). It functions in the pathway amino-sugar metabolism; 1,6-anhydro-N-acetylmuramate degradation. It participates in cell wall biogenesis; peptidoglycan recycling. Functionally, catalyzes the specific phosphorylation of 1,6-anhydro-N-acetylmuramic acid (anhMurNAc) with the simultaneous cleavage of the 1,6-anhydro ring, generating MurNAc-6-P. Is required for the utilization of anhMurNAc either imported from the medium or derived from its own cell wall murein, and thus plays a role in cell wall recycling. Contributes to intrinsic fosfomycin resistance in P.aeruginosa. The protein is Anhydro-N-acetylmuramic acid kinase of Pseudomonas aeruginosa (strain ATCC 15692 / DSM 22644 / CIP 104116 / JCM 14847 / LMG 12228 / 1C / PRS 101 / PAO1).